Consider the following 100-residue polypeptide: MADEEKLPPGWEKRMSRPSGRGYYFNHITNPSQWERPSGNSSSGGKIWQGEPARVRRSHLLVKPVKAALDLAAGNHPDQGGGPGADQRLHPEDQGRREGL.

Residues 1–15 (MADEEKLPPGWEKRM) are compositionally biased toward basic and acidic residues. Disordered regions lie at residues 1–52 (MADE…QGEP) and 69–100 (LDLA…REGL). Residues 5 to 38 (EKLPPGWEKRMSRPSGRGYYFNHITNPSQWERPS) enclose the WW domain. Over residues 27–44 (HITNPSQWERPSGNSSSG) the composition is skewed to polar residues. The span at 87 to 100 (QRLHPEDQGRREGL) shows a compositional bias: basic and acidic residues.

The polypeptide is Putative PIN1-like protein (PIN1P1) (Homo sapiens (Human)).